A 119-amino-acid polypeptide reads, in one-letter code: Large ribosomal subunit protein uL18 (119 aa).

This sequence belongs to the universal ribosomal protein uL18 family. Part of the 50S ribosomal subunit; part of the 5S rRNA/L5/L18/L25 subcomplex. Contacts the 5S and 23S rRNAs.

Its function is as follows. This is one of the proteins that bind and probably mediate the attachment of the 5S RNA into the large ribosomal subunit, where it forms part of the central protuberance. The chain is Large ribosomal subunit protein uL18 from Clostridium botulinum (strain Langeland / NCTC 10281 / Type F).